We begin with the raw amino-acid sequence, 372 residues long: Glutamate 5-kinase (372 aa).

Position 14 (K14) interacts with ATP. Substrate-binding residues include S54, D141, and N153. 173 to 174 (TD) contributes to the ATP binding site. The PUA domain maps to 280-358 (RGHVVIDAGA…GEIETVLGYM (79 aa)).

Belongs to the glutamate 5-kinase family.

The protein localises to the cytoplasm. The catalysed reaction is L-glutamate + ATP = L-glutamyl 5-phosphate + ADP. It participates in amino-acid biosynthesis; L-proline biosynthesis; L-glutamate 5-semialdehyde from L-glutamate: step 1/2. Catalyzes the transfer of a phosphate group to glutamate to form L-glutamate 5-phosphate. The protein is Glutamate 5-kinase of Burkholderia mallei (strain NCTC 10229).